We begin with the raw amino-acid sequence, 199 residues long: Pyridoxal 5'-phosphate synthase subunit PdxT (199 aa).

L-glutamine is bound at residue 52 to 54; sequence GES. Residue C84 is the Nucleophile of the active site. L-glutamine is bound by residues R115 and 143 to 144; that span reads IR. Active-site charge relay system residues include H179 and E181.

The protein belongs to the glutaminase PdxT/SNO family. In the presence of PdxS, forms a dodecamer of heterodimers. Only shows activity in the heterodimer.

It carries out the reaction aldehydo-D-ribose 5-phosphate + D-glyceraldehyde 3-phosphate + L-glutamine = pyridoxal 5'-phosphate + L-glutamate + phosphate + 3 H2O + H(+). It catalyses the reaction L-glutamine + H2O = L-glutamate + NH4(+). It functions in the pathway cofactor biosynthesis; pyridoxal 5'-phosphate biosynthesis. Its function is as follows. Catalyzes the hydrolysis of glutamine to glutamate and ammonia as part of the biosynthesis of pyridoxal 5'-phosphate. The resulting ammonia molecule is channeled to the active site of PdxS. The polypeptide is Pyridoxal 5'-phosphate synthase subunit PdxT (Methanosarcina acetivorans (strain ATCC 35395 / DSM 2834 / JCM 12185 / C2A)).